A 199-amino-acid chain; its full sequence is Transgelin-3 (199 aa).

One can recognise a Calponin-homology (CH) domain in the interval 24-136; the sequence is ADLENKLVDW…RTLMALGSVA (113 aa). Phosphoserine is present on Ser163. Residues 174-199 form a Calponin-like repeat; it reads IGLQMGSNKGASQAGMTGYGMPRQIM. Residues 178-188 show a composition bias toward polar residues; sequence MGSNKGASQAG. A disordered region spans residues 178–199; that stretch reads MGSNKGASQAGMTGYGMPRQIM.

It belongs to the calponin family.

The sequence is that of Transgelin-3 (TAGLN3) from Bos taurus (Bovine).